A 174-amino-acid chain; its full sequence is C-type lectin domain family 2 member A (174 aa).

At 1–27 the chain is on the cytoplasmic side; that stretch reads MINPELRDGRADGFIHRIVPKLIQNWK. The chain crosses the membrane as a helical; Signal-anchor for type II membrane protein span at residues 28-48; that stretch reads IGLMCFLSIIITTVCIIMIAT. Residues 49 to 174 are Extracellular-facing; it reads WSKHAKPVAC…WICSKPKYFL (126 aa). A disulfide bridge connects residues Cys-58 and Cys-69. A C-type lectin domain is found at 65–174; that stretch reads VRDKCFYFSD…WICSKPKYFL (110 aa). Asn-78, Asn-130, and Asn-143 each carry an N-linked (GlcNAc...) asparagine glycan. Cys-86 and Cys-167 are joined by a disulfide.

As to quaternary structure, homodimer; non-disulfide-linked. Interacts with KLRB1. Interacts with KLRF2. Post-translationally, N-glycosylated. In terms of tissue distribution, mainly expressed in skin. Also expressed in keratinocytes, spleen, thymus, small intestine, peripheral blood monocytes, bone marrow, ovary, testis and skin. High expression in CD8(+), B-lymphocytes and naive CD4(+) T-cells. Restricted mostly to proliferating lymphocytes. Not detected in myeloid leukocytes or natural killer (NK) cells.

The protein localises to the cell membrane. In terms of biological role, membrane-bound protein expressed mainly on keratinocytes which acts as a ligand to stimulate the activating receptor NKp65/KLRF2, expressed on the surface of natural killer (NK) cells. Facilitates thereby dedicated immune recognition of keratinocytes leading to natural killer cell mediated cytotoxicity. Also plays a role in modulating the extent of T-cell expansion. The sequence is that of C-type lectin domain family 2 member A (CLEC2A) from Homo sapiens (Human).